The following is a 92-amino-acid chain: Small ribosomal subunit protein uS19c (92 aa).

It belongs to the universal ribosomal protein uS19 family.

The protein localises to the plastid. It is found in the chloroplast. Functionally, protein S19 forms a complex with S13 that binds strongly to the 16S ribosomal RNA. In Spirogyra maxima (Green alga), this protein is Small ribosomal subunit protein uS19c.